We begin with the raw amino-acid sequence, 201 residues long: Small ribosomal subunit protein uS4c (201 aa).

Residues 15-43 form a disordered region; the sequence is LGALPGLTRKTPKSGSNQKKKFHSGKKEQ. Residues 89–150 enclose the S4 RNA-binding domain; the sequence is MRLDNILFRL…NQRSKRLVQN (62 aa).

This sequence belongs to the universal ribosomal protein uS4 family. As to quaternary structure, part of the 30S ribosomal subunit. Contacts protein S5. The interaction surface between S4 and S5 is involved in control of translational fidelity.

Its subcellular location is the plastid. It localises to the chloroplast. Functionally, one of the primary rRNA binding proteins, it binds directly to 16S rRNA where it nucleates assembly of the body of the 30S subunit. In terms of biological role, with S5 and S12 plays an important role in translational accuracy. In Sorghum bicolor (Sorghum), this protein is Small ribosomal subunit protein uS4c (rps4).